Consider the following 92-residue polypeptide: Acylphosphatase (92 aa).

An Acylphosphatase-like domain is found at 5 to 92 (YIVAYVYGVV…TPFETFSIRY (88 aa)). Active-site residues include arginine 20 and asparagine 38.

This sequence belongs to the acylphosphatase family.

It carries out the reaction an acyl phosphate + H2O = a carboxylate + phosphate + H(+). The protein is Acylphosphatase (acyP) of Yersinia pseudotuberculosis serotype O:1b (strain IP 31758).